A 132-amino-acid chain; its full sequence is Female-specific protein 800 (132 aa).

In terms of biological role, FS800 is likely to have some function in the production or maintenance of the schistosome egg. It may have a function unrelated to eggshell formation. This chain is Female-specific protein 800, found in Schistosoma mansoni (Blood fluke).